A 217-amino-acid polypeptide reads, in one-letter code: Nitrile hydratase subunit beta (217 aa).

This sequence belongs to the nitrile hydratase subunit beta family. Heterodimer of an alpha and a beta chain.

It carries out the reaction an aliphatic primary amide = an aliphatic nitrile + H2O. NHase catalyzes the hydration of various nitrile compounds to the corresponding amides. The protein is Nitrile hydratase subunit beta (nthB) of Pseudomonas putida (Arthrobacter siderocapsulatus).